A 279-amino-acid polypeptide reads, in one-letter code: MTYADQVFKQNIQNILDNGVFSENARPKYKDGQMANSKYVTGSFVTYDLQKGEFPITTLRPIPIKSAIKELMWIYQDQTSELSVLEEKYGVKYWGEWRIGDGTIGQRYGATVKKYNIIGKLLEGLAKNPWNRRNIINLWQYEDFEETEGLLPCAFQTMFDVRREKDGQIYLDATLIQRSNDMLVAHHINAMQYVALQMMIAKHFSWKVGKFFYFVNNLHIYDNQFEQANELMKRTASEKEPRLVLNVPDGTNFFDIKPEDFELVDYEPVKPQLKFDLAI.

Position 132–133 (132–133 (RR)) interacts with dUMP. The active-site Nucleophile is cysteine 153. DUMP contacts are provided by residues 178-181 (RSND), asparagine 189, and 219-221 (HIY). Residue aspartate 181 participates in (6R)-5,10-methylene-5,6,7,8-tetrahydrofolate binding. Alanine 278 serves as a coordination point for (6R)-5,10-methylene-5,6,7,8-tetrahydrofolate.

It belongs to the thymidylate synthase family. Bacterial-type ThyA subfamily. In terms of assembly, homodimer.

It is found in the cytoplasm. It carries out the reaction dUMP + (6R)-5,10-methylene-5,6,7,8-tetrahydrofolate = 7,8-dihydrofolate + dTMP. It participates in pyrimidine metabolism; dTTP biosynthesis. Its function is as follows. Catalyzes the reductive methylation of 2'-deoxyuridine-5'-monophosphate (dUMP) to 2'-deoxythymidine-5'-monophosphate (dTMP) while utilizing 5,10-methylenetetrahydrofolate (mTHF) as the methyl donor and reductant in the reaction, yielding dihydrofolate (DHF) as a by-product. This enzymatic reaction provides an intracellular de novo source of dTMP, an essential precursor for DNA biosynthesis. In Lactococcus lactis subsp. cremoris (strain SK11), this protein is Thymidylate synthase.